The primary structure comprises 264 residues: NADH dehydrogenase [ubiquinone] iron-sulfur protein 3, mitochondrial (264 aa).

A mitochondrion-targeting transit peptide spans 1 to 36 (MAAAAVARLWWRGILGASALTRGTGRPSVLLLPVRR).

This sequence belongs to the complex I 30 kDa subunit family. As to quaternary structure, core subunit of respiratory chain NADH dehydrogenase (Complex I) which is composed of 45 different subunits. Interacts with NDUFAF3. Interacts with RAB5IF. Found in subcomplexes containing subunits NDUFS2, MT-ND1 and NDUFA13.

Its subcellular location is the mitochondrion inner membrane. It catalyses the reaction a ubiquinone + NADH + 5 H(+)(in) = a ubiquinol + NAD(+) + 4 H(+)(out). Functionally, core subunit of the mitochondrial membrane respiratory chain NADH dehydrogenase (Complex I) which catalyzes electron transfer from NADH through the respiratory chain, using ubiquinone as an electron acceptor. Essential for the catalytic activity and assembly of complex I. The protein is NADH dehydrogenase [ubiquinone] iron-sulfur protein 3, mitochondrial (NDUFS3) of Homo sapiens (Human).